The primary structure comprises 447 residues: 2-oxoadipate dioxygenase/decarboxylase (447 aa).

2-oxoadipate is bound by residues His68, Arg72, and His224. His68 is a binding site for Fe(2+). Residues His224 and Glu290 each contribute to the Fe(2+) site. Residue Val391 participates in 2-oxoadipate binding.

This sequence belongs to the 2-oxoadipate dioxygenase/decarboxylase family. Fe(2+) serves as cofactor.

The catalysed reaction is 2-oxoadipate + O2 = (R)-2-hydroxyglutarate + CO2. Catalyzes the decarboxylation and hydroxylation of 2-oxoadipate (2OA) to form D-2-hydroxyglutarate (D-2-HGA). This is 2-oxoadipate dioxygenase/decarboxylase from Shigella flexneri.